The sequence spans 505 residues: Flagellin (505 aa).

This sequence belongs to the bacterial flagellin family.

Its subcellular location is the secreted. It is found in the bacterial flagellum. Functionally, flagellin is the subunit protein which polymerizes to form the filaments of bacterial flagella. The polypeptide is Flagellin (fliC) (Salmonella muenchen).